The chain runs to 584 residues: ATP synthase subunit alpha, mitochondrial (584 aa).

A mitochondrion-targeting transit peptide spans 1-24; the sequence is MRRFGSKFASGLASRCALACPLAS. ATP-binding positions include 207 to 214 and glutamine 464; that span reads DRQTGKTS.

It belongs to the ATPase alpha/beta chains family. As to quaternary structure, F-type ATPases have 2 components, F(1) - the catalytic core - and F(o) - the membrane proton channel. F(1) has five subunits: alpha(3), beta(3), gamma(1), delta(1), epsilon(1), plus the additional subunit P18 (Tb427.05.1710) that is not present in F(1)F(o) ATP synthase from metazoa. Subunit P18 (Tb927.5.1710) interacts with the alpha subunit with a 1:1 stoichiometry; the interaction is direct. Subunit gamma is part of the central stalk. F(o) has three main subunits: a, b and c. The trypanosomal ATPase complex contains additional subunits that are not present in the F(1)F(o) ATP synthase from metazoa.

It localises to the mitochondrion. The protein localises to the mitochondrion inner membrane. Functionally, mitochondrial membrane ATP synthase (F(1)F(o) ATP synthase) produces ATP from ADP in the presence of a proton gradient across the membrane which is generated by electron transport complexes of the respiratory chain. F-type ATPases consist of two structural domains, F(1) - containing the extramembraneous catalytic core, and F(o) - containing the membrane proton channel, linked together by a central stalk and a peripheral stalk. During catalysis, ATP synthesis in the catalytic domain of F(1) is coupled via a rotary mechanism of the central stalk subunits to proton translocation. Subunits alpha and beta form the catalytic core in F(1). Rotation of the central stalk against the surrounding alpha(3)beta(3) subunits leads to hydrolysis of ATP in three separate catalytic sites on the beta subunits. Subunit alpha does not bear the catalytic high-affinity ATP-binding sites. Contrary to the procyclic, insect form that requires F(1)F(o) ATP synthase for ATP synthesis, the bloodstream form relies on ATP hydrolysis by F(1)F(o) ATP synthase to maintain its mitochondrial membrane potential. The protein is ATP synthase subunit alpha, mitochondrial of Trypanosoma brucei brucei.